The following is a 147-amino-acid chain: Large ribosomal subunit protein uL13 (147 aa).

This sequence belongs to the universal ribosomal protein uL13 family. As to quaternary structure, part of the 50S ribosomal subunit.

In terms of biological role, this protein is one of the early assembly proteins of the 50S ribosomal subunit, although it is not seen to bind rRNA by itself. It is important during the early stages of 50S assembly. The polypeptide is Large ribosomal subunit protein uL13 (Rhodococcus opacus (strain B4)).